A 207-amino-acid polypeptide reads, in one-letter code: Outer-membrane lipoprotein LolB (207 aa).

A signal peptide spans 1-21 (MPLPDFRLIRLLPLAALVLTA). Cys22 is lipidated: N-palmitoyl cysteine. Residue Cys22 is the site of S-diacylglycerol cysteine attachment.

It belongs to the LolB family. As to quaternary structure, monomer.

It is found in the cell outer membrane. Its function is as follows. Plays a critical role in the incorporation of lipoproteins in the outer membrane after they are released by the LolA protein. The protein is Outer-membrane lipoprotein LolB of Escherichia coli (strain SMS-3-5 / SECEC).